The following is a 160-amino-acid chain: UPF0479 membrane protein YER190C-B (160 aa).

Transmembrane regions (helical) follow at residues 39-59 (IVFC…KVLQ) and 136-156 (VPMI…ISQH).

Belongs to the UPF0479 family.

It is found in the membrane. The chain is UPF0479 membrane protein YER190C-B from Saccharomyces cerevisiae (strain ATCC 204508 / S288c) (Baker's yeast).